The primary structure comprises 142 residues: Small ribosomal subunit protein uS12 (142 aa).

The protein belongs to the universal ribosomal protein uS12 family. In terms of assembly, part of the 30S ribosomal subunit.

Its function is as follows. With S4 and S5 plays an important role in translational accuracy. Located at the interface of the 30S and 50S subunits. This chain is Small ribosomal subunit protein uS12, found in Methanosarcina barkeri (strain Fusaro / DSM 804).